The primary structure comprises 206 residues: Large ribosomal subunit protein uL3 (206 aa).

The segment at 127 to 151 (SGGPSSHGSKFHRHLGGTGQATTPA) is disordered.

The protein belongs to the universal ribosomal protein uL3 family. As to quaternary structure, part of the 50S ribosomal subunit. Forms a cluster with proteins L14 and L19.

One of the primary rRNA binding proteins, it binds directly near the 3'-end of the 23S rRNA, where it nucleates assembly of the 50S subunit. This Borreliella afzelii (strain PKo) (Borrelia afzelii) protein is Large ribosomal subunit protein uL3.